A 220-amino-acid polypeptide reads, in one-letter code: Vesicle-associated membrane protein 7 (220 aa).

At 2-188 (AILFAVVARG…ARAMCMKNLK (187 aa)) the chain is on the cytoplasmic side. A Longin domain is found at 7–110 (VVARGTTILA…AMNSEFSSVL (104 aa)). The 61-residue stretch at 125–185 (QVAETQAQVD…RNLARAMCMK (61 aa)) folds into the v-SNARE coiled-coil homology domain. Residues 189–209 (LTIIIIIVSIVIIYIIVSAAC) form a helical; Anchor for type IV membrane protein membrane-spanning segment. Over 210-220 (GGLAWPSCVQK) the chain is Vesicular.

The protein belongs to the synaptobrevin family.

The protein resides in the cytoplasmic vesicle. It localises to the secretory vesicle membrane. It is found in the golgi apparatus. The protein localises to the trans-Golgi network membrane. Its subcellular location is the late endosome membrane. The protein resides in the lysosome membrane. It localises to the endoplasmic reticulum membrane. It is found in the phagosome membrane. The protein localises to the synapse. Its subcellular location is the synaptosome. In terms of biological role, involved in the targeting and/or fusion of transport vesicles to their target membrane during transport of proteins from the early endosome to the lysosome. Required for heterotypic fusion of late endosomes with lysosomes and homotypic lysosomal fusion. Required for calcium regulated lysosomal exocytosis. Involved in the export of chylomicrons from the endoplasmic reticulum to the cis Golgi. Required for focal exocytosis of late endocytic vesicles during phagosome formation. The chain is Vesicle-associated membrane protein 7 from Gallus gallus (Chicken).